A 190-amino-acid polypeptide reads, in one-letter code: Elongation factor P 2 (190 aa).

The protein belongs to the elongation factor P family.

The protein resides in the cytoplasm. It functions in the pathway protein biosynthesis; polypeptide chain elongation. Its function is as follows. Involved in peptide bond synthesis. Stimulates efficient translation and peptide-bond synthesis on native or reconstituted 70S ribosomes in vitro. Probably functions indirectly by altering the affinity of the ribosome for aminoacyl-tRNA, thus increasing their reactivity as acceptors for peptidyl transferase. This chain is Elongation factor P 2 (efp2), found in Protochlamydia amoebophila (strain UWE25).